The following is a 288-amino-acid chain: Energy-coupling factor transporter ATP-binding protein EcfA2 (288 aa).

Residues 3 to 243 form the ABC transporter domain; the sequence is IVFEAVSHIY…RAELEAIGLG (241 aa). 40–47 serves as a coordination point for ATP; that stretch reads GPTGSGKS.

The protein belongs to the ABC transporter superfamily. Energy-coupling factor EcfA family. In terms of assembly, forms a stable energy-coupling factor (ECF) transporter complex composed of 2 membrane-embedded substrate-binding proteins (S component), 2 ATP-binding proteins (A component) and 2 transmembrane proteins (T component).

The protein localises to the cell membrane. Its function is as follows. ATP-binding (A) component of a common energy-coupling factor (ECF) ABC-transporter complex. Unlike classic ABC transporters this ECF transporter provides the energy necessary to transport a number of different substrates. The chain is Energy-coupling factor transporter ATP-binding protein EcfA2 from Symbiobacterium thermophilum (strain DSM 24528 / JCM 14929 / IAM 14863 / T).